A 523-amino-acid chain; its full sequence is Anthranilate synthase component 1 (523 aa).

Residues Ser-45 and 296–298 (PYM) contribute to the L-tryptophan site. 333–334 (GT) is a binding site for chorismate. Glu-366 contacts Mg(2+). Chorismate contacts are provided by residues Tyr-454, Arg-474, 488–490 (GAG), and Gly-490. Residue Glu-503 participates in Mg(2+) binding.

It belongs to the anthranilate synthase component I family. Heterotetramer consisting of two non-identical subunits: a beta subunit (TrpG) and a large alpha subunit (TrpE). Mg(2+) serves as cofactor.

The enzyme catalyses chorismate + L-glutamine = anthranilate + pyruvate + L-glutamate + H(+). The protein operates within amino-acid biosynthesis; L-tryptophan biosynthesis; L-tryptophan from chorismate: step 1/5. With respect to regulation, feedback inhibited by tryptophan. Functionally, part of a heterotetrameric complex that catalyzes the two-step biosynthesis of anthranilate, an intermediate in the biosynthesis of L-tryptophan. In the first step, the glutamine-binding beta subunit (TrpG) of anthranilate synthase (AS) provides the glutamine amidotransferase activity which generates ammonia as a substrate that, along with chorismate, is used in the second step, catalyzed by the large alpha subunit of AS (TrpE) to produce anthranilate. In the absence of TrpG, TrpE can synthesize anthranilate directly from chorismate and high concentrations of ammonia. This Vibrio cholerae serotype O1 (strain ATCC 39315 / El Tor Inaba N16961) protein is Anthranilate synthase component 1 (trpE).